We begin with the raw amino-acid sequence, 1097 residues long: MSSSAIQVAKTATYLPDLVEVQRASFKWFLDLGLIEELESFSPITDYTGKLELHFIGSEYRLKRPRHDVEEAKRRDATFASQMYVTCRLVNKETGEIKEQEVFIGELPLMTERGTFIINGAERVIVNQIVRSPGVYFKDEMDKNGRRTYNASVIPNRGAWLKFETDKNSLLHVRVDKTRKINAHVLMRAMGLSDNDVLDKLRHPEFYKKSIDAANDEGISSEDQALLELYKKLRPGEPPSVSGGQQLLQTRFFDPKRYDLGRVGRYKINKKLRLTIPDTVRTLTHEDVLSTLDYLINLELDVGGASLDDIDHLGNRRVRSVGELLQNQVRVGLNRLERIIKERMTVGETDSLTPAQLVNPKPLVAAIKEFFGSSQLSQFMDQTNPLAELTHKRRISALGPGGLTRERAGFAVRDIHPSHYGRLCPIETPEGPNAGLINSLATHARVNEYGFIETPFWKVENGVVIKDGDPIYLSADREDEVRVAPGDVATESDGRIKADLIPVRYRQDFEKVPPEQVDYVALSPVQVISVAASLIPFLEHDDANRALMGSNMQRQAVPLLRPERALVGTGLETQVARDSGMVPISRVNGTVIFVDATAIVVQDEDGQEHTHYLQKYQRSNQDTCLNHRPIVRCGDQVIVGQVMADGSACEGGEIALGQNVLIAYMPWEGYNFEDALLVSERLVTDDLYTSVHIEKYEIEARQTKLGPEEITREIPNVAEESLGNLDEMGIIRVGAFVESGDILVGKVTPKGESDQPPEEKLLRAIFGEKARDVRDNSLRVPGTERGRVVDVRIYTREQGDELPPGANMVVRVYVAQRRKIQVGDKMAGRHGNKGIISRILPREDMPYLPDGTPVDICLNPLGVPSRMNVGQVFELLMGWAASNLDSRVRIVPFDEMHGAEMSQETCEAFLKEAAKQPGKAWVYNPDDPGKLVLRDGRTGQPFDQPVAVGYSHFLKLVHLVDDKIHARSTGPYSLVTQQPLGGKAQQGGQRLGEMEVWALEAYGAAYTLQELLTVKSDDMQGRNEALNAIVKGKPIPRPGTPESFKVLMRELQSLGLDIAVYTDEGKEVDLMQDVNPRRSTPSRPTYESLGVADYDED.

Residues 1072-1097 (QDVNPRRSTPSRPTYESLGVADYDED) are disordered.

The protein belongs to the RNA polymerase beta chain family. As to quaternary structure, in cyanobacteria the RNAP catalytic core is composed of 2 alpha, 1 beta, 1 beta', 1 gamma and 1 omega subunit. When a sigma factor is associated with the core the holoenzyme is formed, which can initiate transcription.

It carries out the reaction RNA(n) + a ribonucleoside 5'-triphosphate = RNA(n+1) + diphosphate. DNA-dependent RNA polymerase catalyzes the transcription of DNA into RNA using the four ribonucleoside triphosphates as substrates. This is DNA-directed RNA polymerase subunit beta from Parasynechococcus marenigrum (strain WH8102).